The chain runs to 343 residues: GTPase Obg (343 aa).

The 157-residue stretch at 1–157 folds into the Obg domain; that stretch reads MKFIDEVSIS…IEVRLELKLI (157 aa). The segment at 13-44 is disordered; it reads SGRGGPGCVSFRRESMQARGGPDGGNGGKGGD. Over residues 33–43 the composition is skewed to gly residues; it reads GPDGGNGGKGG. The OBG-type G domain occupies 158–338; sequence ADVGIVGFPN…FVQELARQIL (181 aa). GTP is bound by residues 164-171, 189-193, 211-214, 290-293, and 319-321; these read GFPNAGKS, FTTLT, DIPG, NKID, and SAV. The Mg(2+) site is built by serine 171 and threonine 191.

It belongs to the TRAFAC class OBG-HflX-like GTPase superfamily. OBG GTPase family. Monomer. The cofactor is Mg(2+).

It is found in the cytoplasm. Its function is as follows. An essential GTPase which binds GTP, GDP and possibly (p)ppGpp with moderate affinity, with high nucleotide exchange rates and a fairly low GTP hydrolysis rate. Plays a role in control of the cell cycle, stress response, ribosome biogenesis and in those bacteria that undergo differentiation, in morphogenesis control. The polypeptide is GTPase Obg (Bdellovibrio bacteriovorus (strain ATCC 15356 / DSM 50701 / NCIMB 9529 / HD100)).